A 146-amino-acid polypeptide reads, in one-letter code: Globin (146 aa).

An N-acetylalanine modification is found at Ala1. Residues 1–146 (ALSAAEAEVV…IIDAMKKAGK (146 aa)) form the Globin domain. His95 contributes to the heme b binding site.

Belongs to the globin family. Monomer.

The protein is Globin of Dolabella auricularia (Shoulderblade sea cat).